Reading from the N-terminus, the 251-residue chain is MTEAQRHQILLEMLAQLGFVTVEKVVERLGISPATARRDINKLDESGKLKKVRNGAEAITQQRPRWTPMNLHQAQNHDEKVRIAKAASQLVNPGESVVINCGSTAFLLGREMCGKPVQIITNYLPLANYLIDQEHDSVIIMGGQYNKSQSITLSPQGSENSLYAGHWMFTSGKGLTAEGLYKTDMLTAMAEQKMLSVVGKLVVLVDSSKIGERAGMLFSRADQIDMLITGKNANPEILQQLEAQGVSILRV.

The region spanning 3–58 (EAQRHQILLEMLAQLGFVTVEKVVERLGISPATARRDINKLDESGKLKKVRNGAEA) is the HTH deoR-type domain. The segment at residues 20-39 (VTVEKVVERLGISPATARRD) is a DNA-binding region (H-T-H motif).

Its subcellular location is the cytoplasm. Functionally, represses ulaG and the ulaABCDEF operon. This is HTH-type transcriptional regulator UlaR from Escherichia coli O139:H28 (strain E24377A / ETEC).